We begin with the raw amino-acid sequence, 458 residues long: UDP-N-acetylmuramoylalanine--D-glutamate ligase (458 aa).

ATP is bound at residue 124–130 (GSDGKTT).

The protein belongs to the MurCDEF family.

Its subcellular location is the cytoplasm. It carries out the reaction UDP-N-acetyl-alpha-D-muramoyl-L-alanine + D-glutamate + ATP = UDP-N-acetyl-alpha-D-muramoyl-L-alanyl-D-glutamate + ADP + phosphate + H(+). It functions in the pathway cell wall biogenesis; peptidoglycan biosynthesis. Its function is as follows. Cell wall formation. Catalyzes the addition of glutamate to the nucleotide precursor UDP-N-acetylmuramoyl-L-alanine (UMA). The protein is UDP-N-acetylmuramoylalanine--D-glutamate ligase of Clostridium botulinum (strain Okra / Type B1).